The following is a 333-amino-acid chain: DNA primase small subunit PriS (333 aa).

Catalysis depends on residues D96, D98, and D237.

The protein belongs to the eukaryotic-type primase small subunit family. Heterodimer of a small subunit (PriS) and a large subunit (PriL). Mg(2+) is required as a cofactor. The cofactor is Mn(2+).

Functionally, catalytic subunit of DNA primase, an RNA polymerase that catalyzes the synthesis of short RNA molecules used as primers for DNA polymerase during DNA replication. The small subunit contains the primase catalytic core and has DNA synthesis activity on its own. Binding to the large subunit stabilizes and modulates the activity, increasing the rate of DNA synthesis while decreasing the length of the DNA fragments, and conferring RNA synthesis capability. The DNA polymerase activity may enable DNA primase to also catalyze primer extension after primer synthesis. May also play a role in DNA repair. The protein is DNA primase small subunit PriS of Thermoplasma volcanium (strain ATCC 51530 / DSM 4299 / JCM 9571 / NBRC 15438 / GSS1).